The primary structure comprises 445 residues: Phosphoglucosamine mutase (445 aa).

Residue Ser-101 is the Phosphoserine intermediate of the active site. Residues Ser-101, Asp-240, Asp-242, and Asp-244 each coordinate Mg(2+). Ser-101 is subject to Phosphoserine.

This sequence belongs to the phosphohexose mutase family. The cofactor is Mg(2+). Post-translationally, activated by phosphorylation.

It catalyses the reaction alpha-D-glucosamine 1-phosphate = D-glucosamine 6-phosphate. Functionally, catalyzes the conversion of glucosamine-6-phosphate to glucosamine-1-phosphate. This chain is Phosphoglucosamine mutase, found in Pseudomonas aeruginosa (strain LESB58).